Here is a 482-residue protein sequence, read N- to C-terminus: UDP-N-acetylmuramate--L-alanine ligase (482 aa).

123 to 129 is an ATP binding site; that stretch reads GTHGKTT.

The protein belongs to the MurCDEF family.

The protein resides in the cytoplasm. It catalyses the reaction UDP-N-acetyl-alpha-D-muramate + L-alanine + ATP = UDP-N-acetyl-alpha-D-muramoyl-L-alanine + ADP + phosphate + H(+). Its pathway is cell wall biogenesis; peptidoglycan biosynthesis. Functionally, cell wall formation. This is UDP-N-acetylmuramate--L-alanine ligase from Pseudomonas putida (strain ATCC 700007 / DSM 6899 / JCM 31910 / BCRC 17059 / LMG 24140 / F1).